Consider the following 473-residue polypeptide: Siroheme synthase 1 (473 aa).

The tract at residues 1–204 is precorrin-2 dehydrogenase /sirohydrochlorin ferrochelatase; it reads MDYFPIFCQL…NDHVQADQHV (204 aa). NAD(+) contacts are provided by residues 22 to 23 and 43 to 44; these read EI and CE. Residue Ser128 is modified to Phosphoserine. The segment at 216–473 is uroporphyrinogen-III C-methyltransferase; that stretch reads GEVVLVGAGP…KVTECVAHVG (258 aa). An S-adenosyl-L-methionine-binding site is contributed by Pro225. Asp248 serves as the catalytic Proton acceptor. The Proton donor role is filled by Lys270. Residues 301–303, Ile306, 331–332, Met382, and Gly411 contribute to the S-adenosyl-L-methionine site; these read GGD and TA.

The protein in the N-terminal section; belongs to the precorrin-2 dehydrogenase / sirohydrochlorin ferrochelatase family. This sequence in the C-terminal section; belongs to the precorrin methyltransferase family.

The catalysed reaction is uroporphyrinogen III + 2 S-adenosyl-L-methionine = precorrin-2 + 2 S-adenosyl-L-homocysteine + H(+). The enzyme catalyses precorrin-2 + NAD(+) = sirohydrochlorin + NADH + 2 H(+). It carries out the reaction siroheme + 2 H(+) = sirohydrochlorin + Fe(2+). Its pathway is cofactor biosynthesis; adenosylcobalamin biosynthesis; precorrin-2 from uroporphyrinogen III: step 1/1. The protein operates within cofactor biosynthesis; adenosylcobalamin biosynthesis; sirohydrochlorin from precorrin-2: step 1/1. It functions in the pathway porphyrin-containing compound metabolism; siroheme biosynthesis; precorrin-2 from uroporphyrinogen III: step 1/1. It participates in porphyrin-containing compound metabolism; siroheme biosynthesis; siroheme from sirohydrochlorin: step 1/1. Its pathway is porphyrin-containing compound metabolism; siroheme biosynthesis; sirohydrochlorin from precorrin-2: step 1/1. Multifunctional enzyme that catalyzes the SAM-dependent methylations of uroporphyrinogen III at position C-2 and C-7 to form precorrin-2 via precorrin-1. Then it catalyzes the NAD-dependent ring dehydrogenation of precorrin-2 to yield sirohydrochlorin. Finally, it catalyzes the ferrochelation of sirohydrochlorin to yield siroheme. The polypeptide is Siroheme synthase 1 (Yersinia pestis (strain Pestoides F)).